The chain runs to 473 residues: Arginine biosynthesis bifunctional protein ArgJ, mitochondrial (473 aa).

The substrate site is built by threonine 201, lysine 230, threonine 241, glutamate 328, asparagine 468, and threonine 473. Threonine 241 functions as the Nucleophile in the catalytic mechanism.

The protein belongs to the ArgJ family. Heterodimer of an alpha and a beta chain. The alpha and beta chains are autoproteolytically processed from a single precursor protein within the mitochondrion.

It is found in the mitochondrion matrix. The catalysed reaction is N(2)-acetyl-L-ornithine + L-glutamate = N-acetyl-L-glutamate + L-ornithine. It catalyses the reaction L-glutamate + acetyl-CoA = N-acetyl-L-glutamate + CoA + H(+). Its pathway is amino-acid biosynthesis; L-arginine biosynthesis; L-ornithine and N-acetyl-L-glutamate from L-glutamate and N(2)-acetyl-L-ornithine (cyclic): step 1/1. It participates in amino-acid biosynthesis; L-arginine biosynthesis; N(2)-acetyl-L-ornithine from L-glutamate: step 1/4. Its function is as follows. Catalyzes two activities which are involved in the cyclic version of arginine biosynthesis: the synthesis of acetylglutamate from glutamate and acetyl-CoA, and of ornithine by transacetylation between acetylornithine and glutamate. The polypeptide is Arginine biosynthesis bifunctional protein ArgJ, mitochondrial (Ajellomyces capsulatus (strain G186AR / H82 / ATCC MYA-2454 / RMSCC 2432) (Darling's disease fungus)).